We begin with the raw amino-acid sequence, 100 residues long: Small ribosomal subunit protein uS14c (100 aa).

This sequence belongs to the universal ribosomal protein uS14 family. As to quaternary structure, part of the 30S ribosomal subunit.

It is found in the plastid. The protein localises to the chloroplast. In terms of biological role, binds 16S rRNA, required for the assembly of 30S particles. This chain is Small ribosomal subunit protein uS14c, found in Platanus occidentalis (Sycamore).